Here is a 444-residue protein sequence, read N- to C-terminus: Tol-Pal system protein TolB (444 aa).

The N-terminal stretch at 1–19 (MRNIIYFILLLLFSFKGYA) is a signal peptide.

Belongs to the TolB family. The Tol-Pal system is composed of five core proteins: the inner membrane proteins TolA, TolQ and TolR, the periplasmic protein TolB and the outer membrane protein Pal. They form a network linking the inner and outer membranes and the peptidoglycan layer.

It localises to the periplasm. In terms of biological role, part of the Tol-Pal system, which plays a role in outer membrane invagination during cell division and is important for maintaining outer membrane integrity. The chain is Tol-Pal system protein TolB from Rickettsia akari (strain Hartford).